Reading from the N-terminus, the 304-residue chain is Protein phosphatase PTC7 homolog (304 aa).

A mitochondrion-targeting transit peptide spans 1 to 68; sequence MFSVLSYGRL…GDDACFVARH (68 aa). A PPM-type phosphatase domain is found at 69-299; it reads RSADVLGVAD…DDITVLLSIV (231 aa). Mn(2+) is bound by residues Asp78, Gly79, and Asp223.

The protein belongs to the PP2C family. As to quaternary structure, interacts with FBXL4, BNIP3 and NIX; these interactions are important for ubiquitination and degradation of BNIP3 and NIX. The cofactor is Mg(2+). It depends on Mn(2+) as a cofactor. As to expression, expressed in keratinocytes (at protein level).

The protein localises to the mitochondrion matrix. It catalyses the reaction O-phospho-L-seryl-[protein] + H2O = L-seryl-[protein] + phosphate. The enzyme catalyses O-phospho-L-threonyl-[protein] + H2O = L-threonyl-[protein] + phosphate. Inhibited by sodium orthovanadate. In terms of biological role, protein phosphatase that plays an essential role in mitochondrial metabolism and biogenesis. Positively regulates biosynthesis of the ubiquinone, coenzyme Q. Dephosphorylates the ubiquinone biosynthesis protein COQ7 which is likely to lead to its activation. Serves as a crucial sensor for mitophagy, though the underlying mechanism remains ambiguous. May dephosphorylate BNIP3 and NIX and thereby directly regulates mitophagy receptor function and stability. Alternatively, promotes SCF-FBXL4-dependent ubiquitination and degradation of BNIP3 and NIX independently of its catalytic activity to restrain mitophagy. The polypeptide is Protein phosphatase PTC7 homolog (PPTC7) (Homo sapiens (Human)).